A 152-amino-acid chain; its full sequence is Transcriptional regulator MraZ (152 aa).

SpoVT-AbrB domains lie at 5 to 52 and 81 to 124; these read AHAI…PLCE and ASEC…SETR.

Belongs to the MraZ family. As to quaternary structure, forms oligomers.

The protein localises to the cytoplasm. Its subcellular location is the nucleoid. This is Transcriptional regulator MraZ from Tolumonas auensis (strain DSM 9187 / NBRC 110442 / TA 4).